A 128-amino-acid chain; its full sequence is Small ribosomal subunit protein uS11 (128 aa).

This sequence belongs to the universal ribosomal protein uS11 family. As to quaternary structure, part of the 30S ribosomal subunit. Interacts with proteins S7 and S18. Binds to IF-3.

Functionally, located on the platform of the 30S subunit, it bridges several disparate RNA helices of the 16S rRNA. Forms part of the Shine-Dalgarno cleft in the 70S ribosome. The chain is Small ribosomal subunit protein uS11 from Phytoplasma australiense.